The sequence spans 209 residues: D-aminoacyl-tRNA deacylase 1 (209 aa).

Val4, Gln6, and Cys28 together coordinate Mg(2+). A Gly-cisPro motif, important for rejection of L-amino acids motif is present at residues Gly139–Pro140. The segment at Thr142 to Pro209 is disordered. Basic and acidic residues-rich tracts occupy residues Gln159–Lys170 and Ser181–Ser194. A phosphoserine mark is found at Ser197, Ser204, and Ser205.

Belongs to the DTD family. In terms of assembly, homodimer. Interacts with CDC45 and TOPBP1. In terms of processing, preferentially phosphorylated in cells arrested early in S phase. Phosphorylation in the C-terminus weakens the interaction with CDC45. As to expression, expressed in many adult and fetal tissues. Highest levels in testis, ovary, spleen and in adult and fetal brain.

It localises to the nucleus. It is found in the cytoplasm. It carries out the reaction glycyl-tRNA(Ala) + H2O = tRNA(Ala) + glycine + H(+). The catalysed reaction is a D-aminoacyl-tRNA + H2O = a tRNA + a D-alpha-amino acid + H(+). Its function is as follows. Possible ATPase involved in DNA replication, may facilitate loading of CDC45 onto pre-replication complexes. In terms of biological role, an aminoacyl-tRNA editing enzyme that deacylates mischarged D-aminoacyl-tRNAs. Also deacylates mischarged glycyl-tRNA(Ala), protecting cells against glycine mischarging by AlaRS. Acts via tRNA-based rather than protein-based catalysis; rejects L-amino acids rather than detecting D-amino acids in the active site. By recycling D-aminoacyl-tRNA to D-amino acids and free tRNA molecules, this enzyme counteracts the toxicity associated with the formation of D-aminoacyl-tRNA entities in vivo and helps enforce protein L-homochirality. The sequence is that of D-aminoacyl-tRNA deacylase 1 (DTD1) from Homo sapiens (Human).